A 160-amino-acid polypeptide reads, in one-letter code: MRSKGYRRGTRYLFSQDHRKHGVAHVSKYLEKYEIGDMVDILVNPAMMKGMPHKYYHGRTGRVYDVKPRSLNVALYKRVRGKYVIKKIIVRIEHVRKSRCSEESQKRILMAAEMARDAESRGVVLAPSKRKIEGPRKAVEVSLDNNQPIEVGYEPHVVIF.

It belongs to the eukaryotic ribosomal protein eL21 family.

This Encephalitozoon cuniculi (strain GB-M1) (Microsporidian parasite) protein is Large ribosomal subunit protein eL21 (RPL21).